The chain runs to 478 residues: Calcium uptake protein 1, mitochondrial (478 aa).

The N-terminal 33 residues, 1-33, are a transit peptide targeting the mitochondrion; the sequence is MFRLNSLSALAELAVGSRWYHGGSQPTQIRRRL. Residues 61–85 are disordered; the sequence is PSANNIKSELGDKGKSKEEGEDCNA. Basic and acidic residues predominate over residues 69-85; it reads ELGDKGKSKEEGEDCNA. A polybasic region region spans residues 101 to 112; it reads KKKKRSGFRDRK. A Phosphoserine modification is found at Ser-124. Positions 128 to 131 are k/R-ring; that stretch reads KIFR. Residues 220–255 enclose the EF-hand 1 domain; that stretch reads TPQRNFEIAFKMFDLNGDGEVDMEEFEQVQSIIRSQ. 5 residues coordinate Ca(2+): Asp-233, Asn-235, Asp-237, Glu-239, and Glu-244. The interval 261 to 265 is k/R-ring; the sequence is RHRDR. An EF-hand 2 domain is found at 410-445; the sequence is LSDHVCDVVFALFDCDGNGELSNKEFVSIMKQRLMR. 5 residues coordinate Ca(2+): Asp-423, Asp-425, Asn-427, Glu-429, and Glu-434. An Asymmetric dimethylarginine modification is found at Arg-457. Residues 457–467 are C-helix region; it reads RLMQAMWKCAQ.

The protein belongs to the MICU1 family. MICU1 subfamily. As to quaternary structure, heterodimer; disulfide-linked; heterodimerizes with MICU2 or MICU3. Homodimer; disulfide-linked. Component of the uniplex complex, composed of MCU, EMRE/SMDT1, MICU1 and MICU2 (or MICU3) in a 4:4:1:1 stoichiometry. The composition of calcium sensors within the uniplex complex can differ depending on tissues: a MICU1 homodimer can be present instead of the MICU1-MICU2 heterodimer in skeletal-muscle and kidney. MICU1 is recruited to the uniplex complex by EMRE/SMDT1, and it associates with MCU at low calcium levels, occluding the pore of the MCU channel. Associates with the MICOS complex. Interacts with SLC25A23. Interacts with CHCHD4/MIA40; which introduces the interchain disulfide bond with MICU2. Interacts (when methylated) with UCP2; leading to decrease the calcium sensitivity of MICU1. In terms of processing, phosphorylation at Ser-124 by AKT1 impairs its maturation and stability. Asymmetric dimethylation at Arg-457 by PRMT1 decreases the calcium sensitivity of MICU1 by promoting interaction with UCP2. Post-translationally, degraded by YME1L1 when not complexed as homodimer or heterodimer. Not degraded when complexed as homodimer or heterodimer; the presence of the interchain disulfide bond protecting MICU1 from degradation by YME1L1.

The protein localises to the mitochondrion intermembrane space. The protein resides in the mitochondrion inner membrane. In terms of biological role, calcium sensor of the mitochondrial calcium uniporter (MCU) channel, which senses calcium level via its EF-hand domains. MICU1 and MICU2 (or MICU3) form a disulfide-linked heterodimer that stimulates and inhibits MCU activity, depending on the concentration of calcium. At low calcium levels, MICU1 occludes the pore of the MCU channel, preventing mitochondrial calcium uptake. At higher calcium levels, calcium-binding to MICU1 and MICU2 (or MICU3) induces a conformational change that weakens MCU-MICU1 interactions and moves the MICU1-MICU2 heterodimer away from the pore, allowing calcium permeation through the MCU channel. Also required to protect against manganese toxicity by preventing manganese uptake by MCU: mechanistically, manganese-binding to its EF-hand domains does not induce any conformational change, maintaining MCU pore occlusion. Acts as a regulator of mitochondrial cristae structure independently of its ability to regulate the mitochondrial calcium uniporter channel. Regulates glucose-dependent insulin secretion in pancreatic beta-cells by regulating mitochondrial calcium uptake. Induces T-helper 1-mediated autoreactivity, which is accompanied by the release of IFNG. The polypeptide is Calcium uptake protein 1, mitochondrial (MICU1) (Bos taurus (Bovine)).